The primary structure comprises 257 residues: BTB/POZ domain-containing protein kctd15-like (257 aa).

A phosphoserine mark is found at Ser9 and Ser12. The BTB domain occupies 30 to 100; the sequence is APVHIDVGGH…LRTSKLLLPE (71 aa).

The sequence is that of BTB/POZ domain-containing protein kctd15-like (kctd15l) from Danio rerio (Zebrafish).